Reading from the N-terminus, the 328-residue chain is MHTLIERLEKVTNSKELEEVRLNALGKKGVFADKFNQLKNLNGEEKNAFAKEIHHYKQAFEKAFEWKKKAILELELEERLKKEKIDVSLFNAIKTSSSHPLNYTKNKIIEFFTPLGYKLEIGSLVEDDFHNFSALNLPPYHPARDMQDTFYFKDHKLLRTHTSPVQIHTMQEQTPPIKMICLGETFRRDYDLTHTPMFHQIEGLVVDQKGNIRFTHLKGVIEDFLHYFFGGVKLRWRSSFFPFTEPSAEVDISCVFCKQEGCRVCSHTGWLEVLGCGMVNNAVFEAIGYENVSGFAFGMGIERLAMLTCQINDLRSFFETDLRVLESF.

Glu245 serves as a coordination point for Mg(2+).

This sequence belongs to the class-II aminoacyl-tRNA synthetase family. Phe-tRNA synthetase alpha subunit type 1 subfamily. In terms of assembly, tetramer of two alpha and two beta subunits. It depends on Mg(2+) as a cofactor.

It localises to the cytoplasm. It carries out the reaction tRNA(Phe) + L-phenylalanine + ATP = L-phenylalanyl-tRNA(Phe) + AMP + diphosphate + H(+). The polypeptide is Phenylalanine--tRNA ligase alpha subunit (Helicobacter pylori (strain G27)).